The sequence spans 134 residues: Profilin (134 aa).

Belongs to the profilin family. Interacts with host Tpm1. Interacts with protein A25.

The protein resides in the host cytoplasm. Functionally, participates in either intracellular transport of viral proteins or intercellular spread of the virus. Cellular profilins modulate actin filament dynamics (polymerization and depolymerization) via direct binding to actin through an actin-binding domain as well as by modulation of other actin-binding proteins. In contrast to cellular homologs, the poxvirus profilins seem to bind actin only weakly. This Ectromelia virus (strain Moscow) (ECTV) protein is Profilin.